We begin with the raw amino-acid sequence, 492 residues long: MSTPAKELCRLGLREAGAGVAAKAISSSELVEASLARIQATDGKLGAFLAVSADRARAAARAADARAARGERRSELDGVPVAVKDIFVTKGVPTTAGSRILEGYLPPYDATVVERLEAAGAVIVGKLNMDEFAMGSSNENSAYKPCHNPWDLSRTPGGSSGGSAASVAAGQVHASLGTDTGGSIREPAAFCGVVGVKPTYGRVSRYGVVAFASSLDQVGPLAREVGDAALVLRTIAGHDPRDMTSSTRPVDDYLAPLEDGARGLRVGVPREWLSGGLDAGVEAAVRAALDTYRRLGATLVDVSLPHSKYGIGAYYLIAPAEASSNLARYDGVRFGLRAADAKGLKEMYAESRERGLGAEPKRRIMLGTYALSSGYYDAYYLRAQKVRTLIRRDFDEAFRGCDVIAGPVTPSVAFKLGERTGDPLQMYLADIFTITCNLAALPGLSVPCGLEAASGLPVGLQLVGRPFDEATLFRAARALERELGPLPAPPEP.

Catalysis depends on charge relay system residues Lys84 and Ser159. Ser183 functions as the Acyl-ester intermediate in the catalytic mechanism.

Belongs to the amidase family. GatA subfamily. In terms of assembly, heterotrimer of A, B and C subunits.

It catalyses the reaction L-glutamyl-tRNA(Gln) + L-glutamine + ATP + H2O = L-glutaminyl-tRNA(Gln) + L-glutamate + ADP + phosphate + H(+). Functionally, allows the formation of correctly charged Gln-tRNA(Gln) through the transamidation of misacylated Glu-tRNA(Gln) in organisms which lack glutaminyl-tRNA synthetase. The reaction takes place in the presence of glutamine and ATP through an activated gamma-phospho-Glu-tRNA(Gln). The sequence is that of Glutamyl-tRNA(Gln) amidotransferase subunit A from Anaeromyxobacter sp. (strain K).